The sequence spans 267 residues: Phosphate import ATP-binding protein PstB (267 aa).

The ABC transporter domain maps to 21–262 (VAARNLDFYY…PSKQQTEDYI (242 aa)). 53 to 60 (GPSGCGKS) is a binding site for ATP.

Belongs to the ABC transporter superfamily. Phosphate importer (TC 3.A.1.7) family. As to quaternary structure, the complex is composed of two ATP-binding proteins (PstB), two transmembrane proteins (PstC and PstA) and a solute-binding protein (PstS).

The protein localises to the cell inner membrane. It carries out the reaction phosphate(out) + ATP + H2O = ADP + 2 phosphate(in) + H(+). Part of the ABC transporter complex PstSACB involved in phosphate import. Responsible for energy coupling to the transport system. In Xanthomonas campestris pv. campestris (strain 8004), this protein is Phosphate import ATP-binding protein PstB.